A 256-amino-acid chain; its full sequence is Homeobox-leucine zipper protein HOX28 (256 aa).

The segment at 56–86 (ACSPGSPVSSGSGKRGSGSGSGDEVDDAGCD) is disordered. The span at 58-67 (SPGSPVSSGS) shows a compositional bias: low complexity. The segment at residues 91–150 (GARKKLRLSKDQAAVLEECFKTHHTLTPKQKVALAKSLNLRPRQVEVWFQNRRARTKLKQ) is a DNA-binding region (homeobox). Positions 149-193 (KQTEVDCEHLKRWCDQLADDNRRLHKELAELRALKATPTPPAAAP) are leucine-zipper.

Belongs to the HD-ZIP homeobox family. Class II subfamily. As to expression, expressed in seedlings, roots, stems and panicles.

It localises to the nucleus. Its function is as follows. Probable transcription factor. In Oryza sativa subsp. indica (Rice), this protein is Homeobox-leucine zipper protein HOX28 (HOX28).